Here is a 246-residue protein sequence, read N- to C-terminus: Chalcone--flavanone isomerase 1 (246 aa).

Substrate contacts are provided by Thr-59, Asn-124, and Ser-201.

Belongs to the chalcone isomerase family. As to expression, mostly expressed in siliques and flowers, and, to a lower extent, in leaves.

It carries out the reaction a chalcone = a flavanone.. It participates in secondary metabolite biosynthesis; flavonoid biosynthesis. In terms of biological role, catalyzes the intramolecular cyclization of bicyclic chalcones into tricyclic (S)-flavanones. Responsible for the isomerization of 4,2',4',6'-tetrahydroxychalcone (also termed chalcone) into naringenin. In Arabidopsis thaliana (Mouse-ear cress), this protein is Chalcone--flavanone isomerase 1 (CHI1).